The chain runs to 512 residues: UDP-N-acetylmuramate--L-alanine ligase (512 aa).

Residue 132–138 (GAHGKTT) coordinates ATP.

Belongs to the MurCDEF family.

Its subcellular location is the cytoplasm. It catalyses the reaction UDP-N-acetyl-alpha-D-muramate + L-alanine + ATP = UDP-N-acetyl-alpha-D-muramoyl-L-alanine + ADP + phosphate + H(+). It participates in cell wall biogenesis; peptidoglycan biosynthesis. In terms of biological role, cell wall formation. The sequence is that of UDP-N-acetylmuramate--L-alanine ligase from Bifidobacterium longum subsp. infantis (strain ATCC 15697 / DSM 20088 / JCM 1222 / NCTC 11817 / S12).